A 244-amino-acid chain; its full sequence is Small ribosomal subunit protein uS3 (244 aa).

Residues 39–107 (IRELIKKESF…KLIINVEEIK (69 aa)) enclose the KH type-2 domain. A disordered region spans residues 216–244 (LPVYKNKKNDKNKKRRNNNRKGKSQAAKN). Residues 220–238 (KNKKNDKNKKRRNNNRKGK) show a composition bias toward basic residues.

Belongs to the universal ribosomal protein uS3 family. In terms of assembly, part of the 30S ribosomal subunit. Forms a tight complex with proteins S10 and S14.

In terms of biological role, binds the lower part of the 30S subunit head. Binds mRNA in the 70S ribosome, positioning it for translation. The sequence is that of Small ribosomal subunit protein uS3 from Finegoldia magna (strain ATCC 29328 / DSM 20472 / WAL 2508) (Peptostreptococcus magnus).